The sequence spans 111 residues: MSVALTTLLLFVATAVAELVGCYLPYLWLRKGGSVWLLLPAALSLAVFVWLLTLHPAASGRVYAAYGGVYIATALLWLWWVDRVTPTRWDLLGAGCCLLGMAIIMFSPRSG.

A run of 4 helical transmembrane segments spans residues leucine 8 to tryptophan 28, serine 34 to leucine 54, valine 62 to aspartate 82, and leucine 91 to glycine 111.

It belongs to the UPF0060 family.

The protein resides in the cell inner membrane. The polypeptide is UPF0060 membrane protein XCC2880 (Xanthomonas campestris pv. campestris (strain ATCC 33913 / DSM 3586 / NCPPB 528 / LMG 568 / P 25)).